The primary structure comprises 455 residues: DNA N(6)-methyladenine demethylase ALKBH1C (455 aa).

2 disordered regions span residues 1 to 114 and 173 to 194; these read MNHS…AGDN and SSVE…SNES. Residues 345–455 form the Fe2OG dioxygenase domain; sequence LPDICIVNFY…GRLNLTFRQY (111 aa). Position 352–354 (352–354) interacts with 2-oxoglutarate; sequence NFY. Fe cation is bound by residues histidine 363, aspartate 365, and histidine 423. 447–453 provides a ligand contact to 2-oxoglutarate; the sequence is RLNLTFR.

Belongs to the alkB family. Fe(2+) is required as a cofactor. Expressed at low levels in roots and seedlings, but barely in cauline leaves, rosette leaves, stems, siliques and flowers.

The protein resides in the nucleus. The protein localises to the cytoplasm. It catalyses the reaction an N(6)-methyl-2'-deoxyadenosine in DNA + 2-oxoglutarate + O2 = a 2'-deoxyadenosine in DNA + formaldehyde + succinate + CO2. Functionally, dioxygenase that catalyzes DNA N(6)-methyladenine (6 mA) demethylation with a low efficiency. The protein is DNA N(6)-methyladenine demethylase ALKBH1C of Arabidopsis thaliana (Mouse-ear cress).